A 568-amino-acid chain; its full sequence is Kelch-like protein 12 (568 aa).

The BTB domain maps to 33 to 100 (CDVTLRVEQK…VYTETVHVTV (68 aa)). The 102-residue stretch at 135 to 236 (CLGIRDFAET…LTPRYITDVI (102 aa)) folds into the BACK domain. Kelch repeat units lie at residues 282 to 329 (VLLV…SLHD), 331 to 379 (IYVI…TLGD), 380 to 426 (MIYV…VASG), 427 to 473 (IIYC…LLND), 475 to 520 (IYVV…VLRG), and 522 to 567 (LYAI…VLRE). Residues 405–568 (QWSMLGDMQT…DAGVCVLREK (164 aa)) form an interaction with DVL3 region.

Component of the BCR(KLHL12) E3 ubiquitin ligase complex, at least composed of CUL3 and KLHL12 and RBX1. This complex interacts with DVL3 upon activation of the Wnt signaling pathway by WNT3A. Interacts with DRD4, KLHL2 and SEC31A. Interacts with PEF1 and PDCD6/ALG-2; interaction takes place in response to cytosolic calcium increase and leads to bridge together the BCR(KLHL12) complex and SEC31 (SEC31A or SEC31B). Post-translationally, ubiquitinated by the SCF(FBXL17) complex, leading to its degradation by the proteasome: ubiquitination by the SCF(FBXL17) complex takes place when aberrant BTB domain dimers are formed.

Its subcellular location is the cytoplasmic vesicle. The protein localises to the COPII-coated vesicle. The protein operates within protein modification; protein ubiquitination. In terms of biological role, substrate-specific adapter of a BCR (BTB-CUL3-RBX1) E3 ubiquitin ligase complex that acts as a negative regulator of Wnt signaling pathway and ER-Golgi transport. The BCR(KLHL12) complex is involved in ER-Golgi transport by regulating the size of COPII coats, thereby playing a key role in collagen export, which is required for embryonic stem (ES) cells division: BCR(KLHL12) acts by mediating monoubiquitination of SEC31 (SEC31A or SEC31B). The BCR(KLHL12) complex is also involved in neural crest specification: in response to cytosolic calcium increase, interacts with the heterodimer formed with PEF1 and PDCD6/ALG-2, leading to bridge together the BCR(KLHL12) complex and SEC31 (SEC31A or SEC31B), promoting monoubiquitination of SEC31 and subsequent collagen export. As part of the BCR(KLHL12) complex, also acts as a negative regulator of the Wnt signaling pathway by mediating ubiquitination and subsequent proteolysis of DVL3. The BCR(KLHL12) complex also mediates polyubiquitination of DRD4 and PEF1, without leading to degradation of these proteins. The chain is Kelch-like protein 12 (Klhl12) from Rattus norvegicus (Rat).